The chain runs to 82 residues: Protein Vpu (82 aa).

Topologically, residues 1 to 7 are extracellular; the sequence is MQPIPIV. Residues 8–28 form a helical membrane-spanning segment; the sequence is AIVALVVAIIIAIVVWSIVII. At 29–82 the chain is on the cytoplasmic side; sequence EYRKILRQRKIDRLIDRLIERAEDSGNESEGEISALVEMGVEMGHHAPWDVDDL. Residues S53 and S57 each carry the phosphoserine; by host CK2 modification.

The protein belongs to the HIV-1 VPU protein family. Homopentamer. Interacts with host CD4 and BRTC; these interactions induce proteasomal degradation of CD4. Interacts (via transmembrane region) with host BST2 (via transmembrane region); this interaction leads to the degradation of host BST2. Interacts with host FBXW11. Interacts with host AP1M1; this interaction plays a role in the mistrafficking and subsequent degradation of host BST2. Interacts with host RANBP2; this interaction allows Vpu to down-regulate host BLM sumoylation. Post-translationally, phosphorylated by host CK2. This phosphorylation is necessary for interaction with human BTRC and degradation of CD4.

The protein localises to the host membrane. Its activity is regulated as follows. Ion channel activity is inhibited by hexamethylene amiloride in vitro. Functionally, enhances virion budding by targeting host CD4 and Tetherin/BST2 to proteasome degradation. Degradation of CD4 prevents any unwanted premature interactions between viral Env and its host receptor CD4 in the endoplasmic reticulum. Degradation of antiretroviral protein Tetherin/BST2 is important for virion budding, as BST2 tethers new viral particles to the host cell membrane. Mechanistically, Vpu bridges either CD4 or BST2 to BTRC, a substrate recognition subunit of the Skp1/Cullin/F-box protein E3 ubiquitin ligase, induces their ubiquitination and subsequent proteasomal degradation. The alteration of the E3 ligase specificity by Vpu seems to promote the degradation of host IKBKB, leading to NF-kappa-B down-regulation and subsequent apoptosis. Acts as a viroporin that forms an oligomeric ion channel in membranes. Modulates the host DNA repair mechanisms to promote degradation of nuclear viral cDNA in cells that are already productively infected in order to suppress immune sensing and proviral hyper-integration (superinfection). Manipulates PML-NBs and modulates SUMOylation of host BLM protein thereby enhancing its DNA-end processing activity toward viral unintegrated linear DNA. Also inhibits RAD52-mediated homologous repair of viral cDNA, preventing the generation of dead-end circular forms of single copies of the long terminal repeat and permitting sustained nucleolytic attack. This Human immunodeficiency virus type 1 group M subtype B (isolate HXB2) (HIV-1) protein is Protein Vpu.